Consider the following 364-residue polypeptide: DNA replication and repair protein RecF (364 aa).

Residue 30–37 participates in ATP binding; that stretch reads GNNGQGKT.

The protein belongs to the RecF family.

Its subcellular location is the cytoplasm. Functionally, the RecF protein is involved in DNA metabolism; it is required for DNA replication and normal SOS inducibility. RecF binds preferentially to single-stranded, linear DNA. It also seems to bind ATP. This chain is DNA replication and repair protein RecF, found in Citrifermentans bemidjiense (strain ATCC BAA-1014 / DSM 16622 / JCM 12645 / Bem) (Geobacter bemidjiensis).